The primary structure comprises 376 residues: Probable ureide permease A3 (376 aa).

Residues 1 to 9 (HLVESKGGA) are Extracellular-facing. A helical transmembrane segment spans residues 10–30 (IACMFLALFFLGTWPALLTML). Topologically, residues 31 to 41 (ERRGRLPQHTY) are cytoplasmic. Residues 42–62 (LDYSITNFFAALLIAFTFGEI) form a helical membrane-spanning segment. Over 63 to 80 (GKGKPDEPNFLAQLAQDN) the chain is Extracellular. A helical transmembrane segment spans residues 81-101 (WPSVLFAMGGGVVLSLGNLSS). At 102 to 103 (QY) the chain is on the cytoplasmic side. Residues 104–124 (AFAFVGLSVTEVITASITVVI) traverse the membrane as a helical segment. The Extracellular segment spans residues 125–137 (GTTLNYFLDDKIN). A helical transmembrane segment spans residues 138 to 158 (KAEILFPGVGCFLIAVFLGFC). Over 159–231 (RFNSSNASDN…RAIKVFGKST (73 aa)) the chain is Cytoplasmic. ATP is bound at residue 223-230 (AIKVFGKS). A helical membrane pass occupies residues 232–252 (LIGLALTFSAGLCFSMFSPAF). The Extracellular segment spans residues 253-274 (NLATNDQWHTLPNGIPHLTVYT). The chain crosses the membrane as a helical span at residues 275-295 (AFFYFSISCFVIAIILNITFL). Over 296-317 (YHPVLNLPKSSLKAYLADSDGR) the chain is Cytoplasmic. Residues 318 to 338 (IWALLAGLLCGFGNSLQFMGG) traverse the membrane as a helical segment. The Extracellular segment spans residues 339–376 (QAAGYQQQSLCRHFLCKHFWGVLLFGEYRRSSRKTYIC).

The protein belongs to the plant ureide permease (TC 2.A.7.19) family.

Its subcellular location is the membrane. In terms of biological role, transports a wide spectrum of oxo derivatives of heterocyclic nitrogen compounds. The chain is Probable ureide permease A3 (A3) from Vigna unguiculata (Cowpea).